The following is a 193-amino-acid chain: Crossover junction endodeoxyribonuclease RuvC (193 aa).

Catalysis depends on residues D7, E68, and D141. Mg(2+) contacts are provided by D7, E68, and D141.

The protein belongs to the RuvC family. Homodimer which binds Holliday junction (HJ) DNA. The HJ becomes 2-fold symmetrical on binding to RuvC with unstacked arms; it has a different conformation from HJ DNA in complex with RuvA. In the full resolvosome a probable DNA-RuvA(4)-RuvB(12)-RuvC(2) complex forms which resolves the HJ. The cofactor is Mg(2+).

The protein resides in the cytoplasm. It carries out the reaction Endonucleolytic cleavage at a junction such as a reciprocal single-stranded crossover between two homologous DNA duplexes (Holliday junction).. Functionally, the RuvA-RuvB-RuvC complex processes Holliday junction (HJ) DNA during genetic recombination and DNA repair. Endonuclease that resolves HJ intermediates. Cleaves cruciform DNA by making single-stranded nicks across the HJ at symmetrical positions within the homologous arms, yielding a 5'-phosphate and a 3'-hydroxyl group; requires a central core of homology in the junction. The consensus cleavage sequence is 5'-(A/T)TT(C/G)-3'. Cleavage occurs on the 3'-side of the TT dinucleotide at the point of strand exchange. HJ branch migration catalyzed by RuvA-RuvB allows RuvC to scan DNA until it finds its consensus sequence, where it cleaves and resolves the cruciform DNA. This chain is Crossover junction endodeoxyribonuclease RuvC, found in Bifidobacterium adolescentis (strain ATCC 15703 / DSM 20083 / NCTC 11814 / E194a).